Here is a 200-residue protein sequence, read N- to C-terminus: 3-isopropylmalate dehydratase small subunit 2 (200 aa).

Belongs to the LeuD family. LeuD type 1 subfamily. Heterodimer of LeuC and LeuD.

The catalysed reaction is (2R,3S)-3-isopropylmalate = (2S)-2-isopropylmalate. It participates in amino-acid biosynthesis; L-leucine biosynthesis; L-leucine from 3-methyl-2-oxobutanoate: step 2/4. Its function is as follows. Catalyzes the isomerization between 2-isopropylmalate and 3-isopropylmalate, via the formation of 2-isopropylmaleate. This chain is 3-isopropylmalate dehydratase small subunit 2, found in Mannheimia succiniciproducens (strain KCTC 0769BP / MBEL55E).